The chain runs to 202 residues: ATP-dependent Clp protease proteolytic subunit 1 (202 aa).

The active-site Nucleophile is the S102. Residue H127 is part of the active site.

Belongs to the peptidase S14 family. In terms of assembly, fourteen ClpP subunits assemble into 2 heptameric rings which stack back to back to give a disk-like structure with a central cavity, resembling the structure of eukaryotic proteasomes.

It is found in the cytoplasm. It carries out the reaction Hydrolysis of proteins to small peptides in the presence of ATP and magnesium. alpha-casein is the usual test substrate. In the absence of ATP, only oligopeptides shorter than five residues are hydrolyzed (such as succinyl-Leu-Tyr-|-NHMec, and Leu-Tyr-Leu-|-Tyr-Trp, in which cleavage of the -Tyr-|-Leu- and -Tyr-|-Trp bonds also occurs).. Cleaves peptides in various proteins in a process that requires ATP hydrolysis. Has a chymotrypsin-like activity. Plays a major role in the degradation of misfolded proteins. The protein is ATP-dependent Clp protease proteolytic subunit 1 of Agrobacterium fabrum (strain C58 / ATCC 33970) (Agrobacterium tumefaciens (strain C58)).